We begin with the raw amino-acid sequence, 547 residues long: Methionine--tRNA ligase (547 aa).

Positions 15-25 (PYANGSLHLGH) match the 'HIGH' region motif. Positions 146, 149, 159, and 162 each coordinate Zn(2+). The 'KMSKS' region signature appears at 332-336 (KMSKS). An ATP-binding site is contributed by Lys335.

Belongs to the class-I aminoacyl-tRNA synthetase family. MetG type 1 subfamily. In terms of assembly, monomer. It depends on Zn(2+) as a cofactor.

It is found in the cytoplasm. The catalysed reaction is tRNA(Met) + L-methionine + ATP = L-methionyl-tRNA(Met) + AMP + diphosphate. Functionally, is required not only for elongation of protein synthesis but also for the initiation of all mRNA translation through initiator tRNA(fMet) aminoacylation. The polypeptide is Methionine--tRNA ligase (Baumannia cicadellinicola subsp. Homalodisca coagulata).